Here is a 238-residue protein sequence, read N- to C-terminus: uncharacterized protein (238 aa).

The tract at residues 219-238 is disordered; the sequence is EESINNNVDDTDDIDNDNFI. Positions 227-238 are enriched in acidic residues; sequence DDTDDIDNDNFI.

This is an uncharacterized protein from Buchnera aphidicola subsp. Acyrthosiphon pisum (strain APS) (Acyrthosiphon pisum symbiotic bacterium).